A 414-amino-acid chain; its full sequence is Protein BTN1 (414 aa).

The N-terminal stretch at 1–33 (MQLLIPESRIVFASFFIFGLLNNILYVVILSAA) is a signal peptide. The next 5 helical transmembrane spans lie at 48–68 (LADI…VGLI), 74–94 (IWML…TSDE), 100–120 (IVGI…FLQL), 137–157 (TGGA…MLGM), and 159–179 (VWVV…AFYV). The tract at residues 195–214 (EALDSLDERSDPSSNASFSS) is disordered. Helical transmembrane passes span 242 to 262 (LCLV…TLLF), 281 to 301 (VYGF…SFGI), 306 to 326 (LYLL…QSVH), 332 to 352 (SVWL…FSYV), and 368 to 388 (EFSM…AGCI).

The protein belongs to the battenin family.

It is found in the vacuole membrane. Functionally, involved in vacuolar transport and vacuole pH homeostasis. Also required for cytokinesis. The chain is Protein BTN1 (BTN1) from Debaryomyces hansenii (strain ATCC 36239 / CBS 767 / BCRC 21394 / JCM 1990 / NBRC 0083 / IGC 2968) (Yeast).